A 442-amino-acid polypeptide reads, in one-letter code: Putative FNIP repeat-containing protein L170 (442 aa).

3 FNIP repeats span residues 213 to 252 (FNSS…IGRG), 253 to 294 (FNSE…LGCF), and 295 to 348 (FNQS…FGMY).

This chain is Putative FNIP repeat-containing protein L170, found in Acanthamoeba polyphaga mimivirus (APMV).